Here is a 271-residue protein sequence, read N- to C-terminus: MSQNIVYSLTALMALLPASIYPYHRIAGQGADGRSAYFWGALVLGFAGPAAWALTQVAGRWHTGLSTALWITIAACMLLFMAMSALTRSAWRLSPLLLPYLLTVGAFATLAQQAPAPVVRGGAPGIWIDLHIAVSVITYALLTMAAVASLAAFLQERALKSKRPTPLTRFLPPVTESERMQLHLLGASEAVLGAGLATGMAVLYYETGALLRADHKTLLSVASFVVIGGLLLAHARTGVRGRMAARLVLIAYLLLTLAYPGVKFVTDVLLG.

This is an uncharacterized protein from Azospirillum brasilense.